A 543-amino-acid chain; its full sequence is Chaperonin GroEL 2 (543 aa).

Residues 29-32 (TLGP), 86-90 (DGTTT), glycine 413, 479-481 (NAA), and aspartate 495 contribute to the ATP site.

This sequence belongs to the chaperonin (HSP60) family. Forms a cylinder of 14 subunits composed of two heptameric rings stacked back-to-back. Interacts with the co-chaperonin GroES.

The protein localises to the cytoplasm. The enzyme catalyses ATP + H2O + a folded polypeptide = ADP + phosphate + an unfolded polypeptide.. Its function is as follows. Together with its co-chaperonin GroES, plays an essential role in assisting protein folding. The GroEL-GroES system forms a nano-cage that allows encapsulation of the non-native substrate proteins and provides a physical environment optimized to promote and accelerate protein folding. This chain is Chaperonin GroEL 2, found in Prochlorococcus marinus (strain NATL1A).